Consider the following 280-residue polypeptide: Large ribosomal subunit protein uL2 (280 aa).

2 disordered regions span residues 1 to 59 (MAIR…GGHK) and 223 to 280 (GVVM…NKKR). 2 stretches are compositionally biased toward basic residues: residues 45 to 59 (VHGHITTRHKGGGHK) and 269 to 280 (VRRRRSNKNKKR).

It belongs to the universal ribosomal protein uL2 family. As to quaternary structure, part of the 50S ribosomal subunit. Forms a bridge to the 30S subunit in the 70S ribosome.

In terms of biological role, one of the primary rRNA binding proteins. Required for association of the 30S and 50S subunits to form the 70S ribosome, for tRNA binding and peptide bond formation. It has been suggested to have peptidyltransferase activity; this is somewhat controversial. Makes several contacts with the 16S rRNA in the 70S ribosome. This is Large ribosomal subunit protein uL2 from Corynebacterium jeikeium (strain K411).